We begin with the raw amino-acid sequence, 520 residues long: Cyclic GMP-AMP synthase-like receptor (520 aa).

ATP is bound by residues S68 and 80–82; that span reads EFD. The Mg(2+) site is built by E80, D82, and D198. GTP is bound at residue D198. K264 is an ATP binding site. Mn(2+) contacts are provided by L288 and D294.

This sequence belongs to the mab-21 family. Mg(2+) serves as cofactor. Mn(2+) is required as a cofactor.

It carries out the reaction GTP + ATP = 2',3'-cGAMP + 2 diphosphate. The enzyme catalyses GTP + ATP = pppGp(2'-5')A + diphosphate. The catalysed reaction is pppGp(2'-5')A = 2',3'-cGAMP + diphosphate. Functionally, nucleotidyltransferase that catalyzes the formation of cyclic GMP-AMP (2',3'-cGAMP) from ATP and GTP and plays a key role in innate immunity. Acts as a key sensor of double-stranded RNA (dsRNA), the presence of dsRNA in the cytoplasm being a danger signal that triggers the immune responses. Directly binds dsRNA, activating the nucleotidyltransferase activity, leading to synthesis of 2',3'-cGAMP, a second messenger that binds to and activates Sting, thereby triggering the immune response via activation of the NF-kappa-B transcription factor. This is Cyclic GMP-AMP synthase-like receptor from Microplitis demolitor (Parasitoid wasp).